Consider the following 261-residue polypeptide: Thiazole synthase (261 aa).

K101 functions as the Schiff-base intermediate with DXP in the catalytic mechanism. 1-deoxy-D-xylulose 5-phosphate contacts are provided by residues G162, 188-189, and 210-211; these read AG and NT.

Belongs to the ThiG family. Homotetramer. Forms heterodimers with either ThiH or ThiS.

Its subcellular location is the cytoplasm. The enzyme catalyses [ThiS sulfur-carrier protein]-C-terminal-Gly-aminoethanethioate + 2-iminoacetate + 1-deoxy-D-xylulose 5-phosphate = [ThiS sulfur-carrier protein]-C-terminal Gly-Gly + 2-[(2R,5Z)-2-carboxy-4-methylthiazol-5(2H)-ylidene]ethyl phosphate + 2 H2O + H(+). Its pathway is cofactor biosynthesis; thiamine diphosphate biosynthesis. Catalyzes the rearrangement of 1-deoxy-D-xylulose 5-phosphate (DXP) to produce the thiazole phosphate moiety of thiamine. Sulfur is provided by the thiocarboxylate moiety of the carrier protein ThiS. In vitro, sulfur can be provided by H(2)S. In Azoarcus sp. (strain BH72), this protein is Thiazole synthase.